We begin with the raw amino-acid sequence, 92 residues long: MARTVNCVYLKKEAEGLGFQLYPGPLGKRIFDNVSKEAWGLWQAKQTMLINEKKLNMMNVEDRGFLETQMVNFLFEGKDVEIEGYVPQKDDD.

The protein belongs to the Fe(2+)-trafficking protein family.

Its function is as follows. Could be a mediator in iron transactions between iron acquisition and iron-requiring processes, such as synthesis and/or repair of Fe-S clusters in biosynthetic enzymes. This chain is Probable Fe(2+)-trafficking protein, found in Shewanella woodyi (strain ATCC 51908 / MS32).